The following is a 270-amino-acid chain: Probable septum site-determining protein MinC (270 aa).

The interval 105–129 (DRRAPSSKAADEAPVQQAEPAAPAA) is disordered. Residues 116–129 (EAPVQQAEPAAPAA) are compositionally biased toward low complexity.

This sequence belongs to the MinC family. Interacts with MinD and FtsZ.

Cell division inhibitor that blocks the formation of polar Z ring septums. Rapidly oscillates between the poles of the cell to destabilize FtsZ filaments that have formed before they mature into polar Z rings. Prevents FtsZ polymerization. This is Probable septum site-determining protein MinC from Burkholderia mallei (strain NCTC 10247).